Reading from the N-terminus, the 388-residue chain is Succinate--CoA ligase [ADP-forming] subunit beta (388 aa).

The region spanning lysine 9–leucine 244 is the ATP-grasp domain. Residues lysine 46, glycine 53 to glycine 55, valine 102, and glutamate 107 contribute to the ATP site. Asparagine 199 and aspartate 213 together coordinate Mg(2+). Substrate-binding positions include asparagine 264 and glycine 321 to methionine 323.

This sequence belongs to the succinate/malate CoA ligase beta subunit family. As to quaternary structure, heterotetramer of two alpha and two beta subunits. Requires Mg(2+) as cofactor.

It catalyses the reaction succinate + ATP + CoA = succinyl-CoA + ADP + phosphate. The enzyme catalyses GTP + succinate + CoA = succinyl-CoA + GDP + phosphate. It functions in the pathway carbohydrate metabolism; tricarboxylic acid cycle; succinate from succinyl-CoA (ligase route): step 1/1. In terms of biological role, succinyl-CoA synthetase functions in the citric acid cycle (TCA), coupling the hydrolysis of succinyl-CoA to the synthesis of either ATP or GTP and thus represents the only step of substrate-level phosphorylation in the TCA. The beta subunit provides nucleotide specificity of the enzyme and binds the substrate succinate, while the binding sites for coenzyme A and phosphate are found in the alpha subunit. This chain is Succinate--CoA ligase [ADP-forming] subunit beta, found in Chlamydia felis (strain Fe/C-56) (Chlamydophila felis).